A 290-amino-acid polypeptide reads, in one-letter code: ATP synthase gamma chain (290 aa).

This sequence belongs to the ATPase gamma chain family. As to quaternary structure, F-type ATPases have 2 components, CF(1) - the catalytic core - and CF(0) - the membrane proton channel. CF(1) has five subunits: alpha(3), beta(3), gamma(1), delta(1), epsilon(1). CF(0) has three main subunits: a, b and c.

It localises to the cell inner membrane. In terms of biological role, produces ATP from ADP in the presence of a proton gradient across the membrane. The gamma chain is believed to be important in regulating ATPase activity and the flow of protons through the CF(0) complex. In Paracoccus denitrificans (strain Pd 1222), this protein is ATP synthase gamma chain.